A 493-amino-acid chain; its full sequence is MASGILVNVKEEVTCPICLELLTQPLSLDCGHSFCQACLTANHKKSMLDKGESSCPVCRISYQPENIRPNRHVANIVEKLREVKLSPEGQKVDHCARHGEKLLLFCQEDGKVICWLCERSQEHRGHHTFLTEEVAREYQVKLQAALEMLRQKQQEAEELEADIREEKASWKTQIQYDKTNVLADFEQLRDILDWEESNELQNLEKEEEDILKSLTKSETEMVQQTQSVRELISDLERRLQGSVMELLQGVDGVIKRMENVTLKKPETFPKNQRRVFRAPDLKGMLEVFRELTDVRRYWVDVTVAPNNISCAVISEDMRQVSSPKPQIIYGARGTRYQTFMNFNYCTGILGSQSITSGKHYWEVDVSKKSAWILGVCAGFQPDAMCNIEKNENYQPKYGYWVIGLEEGVKCSAFQDGSFHTPSAPFIVPLSVIICPDRVGVFLDYEACTVSFFNITNHGFLIYKFSHCSFSQPVFPYLNPRKCGVPMTLCSPSS.

N-acetylalanine is present on Ala2. Residues Cys15–Arg59 form an RING-type zinc finger. Ser86 carries the phosphoserine modification. The B box-type zinc-finger motif lies at Gln90–Glu132. Cys95, His98, Cys117, and His123 together coordinate Zn(2+). Residues Thr131–Gln240 are a coiled coil. The required for interaction with GABARAP and for autophagy stretch occupies residues Phe185–Asn198. The region spanning Leu281 to Ser493 is the B30.2/SPRY domain.

It belongs to the TRIM/RBCC family. As to quaternary structure, can form homodimers and homotrimers. In addition to lower-order dimerization, also exhibits a higher-order multimerization and both low- and high-order multimerizations are essential for its restriction activity. Interacts with BTBD1 and BTBD2. Interacts with PSMC4, PSMC5, PSMD7 and HSPA8/HSC70. Interacts (via B30.2/SPRY domain) with HSPA1A/B. Interacts with PSMC2, MAP3K7/TAK1, TAB2 and TAB3. Interacts with SQSTM1. Interacts with TRIM6 and TRIM34. Interacts with ULK1 (phosphorylated form), GABARAP, GABARAPL1, GABARAPL2, MAP1LC3A, MAP1LC3C and BECN1. Post-translationally, degraded in a proteasome-independent fashion in the absence of viral infection but in a proteasome-dependent fashion following exposure to restriction sensitive virus. Autoubiquitinated in a RING finger- and UBE2D2-dependent manner. Monoubiquitinated by TRIM21. Deubiquitinated by Yersinia YopJ. Ubiquitination may not lead to proteasomal degradation.

It localises to the cytoplasm. Its subcellular location is the nucleus. The catalysed reaction is S-ubiquitinyl-[E2 ubiquitin-conjugating enzyme]-L-cysteine + [acceptor protein]-L-lysine = [E2 ubiquitin-conjugating enzyme]-L-cysteine + N(6)-ubiquitinyl-[acceptor protein]-L-lysine.. Its pathway is protein modification; protein ubiquitination. Capsid-specific restriction factor that prevents infection from non-host-adapted retroviruses. Blocks viral replication early in the life cycle, after viral entry but before reverse transcription. In addition to acting as a capsid-specific restriction factor, also acts as a pattern recognition receptor that activates innate immune signaling in response to the retroviral capsid lattice. Binding to the viral capsid triggers its E3 ubiquitin ligase activity, and in concert with the heterodimeric ubiquitin conjugating enzyme complex UBE2V1-UBE2N (also known as UBC13-UEV1A complex) generates 'Lys-63'-linked polyubiquitin chains, which in turn are catalysts in the autophosphorylation of the MAP3K7/TAK1 complex (includes TAK1, TAB2, and TAB3). Activation of the MAP3K7/TAK1 complex by autophosphorylation results in the induction and expression of NF-kappa-B and MAPK-responsive inflammatory genes, thereby leading to an innate immune response in the infected cell. Plays a role in regulating autophagy through activation of autophagy regulator BECN1 by causing its dissociation from its inhibitors BCL2 and TAB2. This is Tripartite motif-containing protein 5 (TRIM5) from Pan paniscus (Pygmy chimpanzee).